The chain runs to 465 residues: VGFKAGVKDYKLTYYTPEYEVKDTDILAAFRVTPQPGVPPEEAGAAVAAESSTGTWTTVWTDGLTSLDRYKGRCYNIEPVAGEESQFIAYVAYPLDLFEEGSVTNMFTSIVGNVFGFKALRALRLEDLRIPNAYIKTFQGPPHGIQVERDKLNKYGRPLLGCTIKPKLGLSAKNYGRAVYECLRGGLDFTKDDENVNSQPFMRWRDRFLFCAEAIYKSQAETGEIKGHYLNATAGTCEEMMKRAVFARELGVPIVMHDYLTGGFTANTTLAHYCRDNGLLLHIHRAMHAVIDRQKNHGMHFRVLAKALRMSGGDHIHAGTVVGKLEGEREITLGFVDLLRDDFIEKDRSRGIYFTQDWVSLPGVLPVASGGIHVWHMPALTEIFGDDSVLQFGGGTLGHPWGNAPGAVANRVALEACVKARNEGRDLAVEGNEIIREASKWSPELAAACEVWKEIKFEFEAMDTL.

K4 is modified (N6,N6,N6-trimethyllysine). Substrate-binding residues include N113 and T163. The active-site Proton acceptor is K165. K167 contacts substrate. Mg(2+) contacts are provided by K191, D193, and E194. K191 carries the post-translational modification N6-carboxylysine. The active-site Proton acceptor is H284. Substrate-binding residues include R285, H317, and S369.

The protein belongs to the RuBisCO large chain family. Type I subfamily. As to quaternary structure, heterohexadecamer of 8 large chains and 8 small chains; disulfide-linked. The disulfide link is formed within the large subunit homodimers. Mg(2+) is required as a cofactor. The disulfide bond which can form in the large chain dimeric partners within the hexadecamer appears to be associated with oxidative stress and protein turnover.

Its subcellular location is the plastid. The protein resides in the chloroplast. It carries out the reaction 2 (2R)-3-phosphoglycerate + 2 H(+) = D-ribulose 1,5-bisphosphate + CO2 + H2O. It catalyses the reaction D-ribulose 1,5-bisphosphate + O2 = 2-phosphoglycolate + (2R)-3-phosphoglycerate + 2 H(+). In terms of biological role, ruBisCO catalyzes two reactions: the carboxylation of D-ribulose 1,5-bisphosphate, the primary event in carbon dioxide fixation, as well as the oxidative fragmentation of the pentose substrate in the photorespiration process. Both reactions occur simultaneously and in competition at the same active site. This is Ribulose bisphosphate carboxylase large chain from Morus rubra (Red mulberry).